Reading from the N-terminus, the 581-residue chain is NADH-quinone oxidoreductase subunit C/D (581 aa).

An NADH dehydrogenase I subunit C region spans residues Met-1–Phe-172. The tract at residues Glu-196 to Arg-581 is NADH dehydrogenase I subunit D.

The protein in the N-terminal section; belongs to the complex I 30 kDa subunit family. In the C-terminal section; belongs to the complex I 49 kDa subunit family. NDH-1 is composed of 13 different subunits. Subunits NuoB, CD, E, F, and G constitute the peripheral sector of the complex.

The protein resides in the cell inner membrane. The catalysed reaction is a quinone + NADH + 5 H(+)(in) = a quinol + NAD(+) + 4 H(+)(out). NDH-1 shuttles electrons from NADH, via FMN and iron-sulfur (Fe-S) centers, to quinones in the respiratory chain. The immediate electron acceptor for the enzyme in this species is believed to be ubiquinone. Couples the redox reaction to proton translocation (for every two electrons transferred, four hydrogen ions are translocated across the cytoplasmic membrane), and thus conserves the redox energy in a proton gradient. This Rhodopseudomonas palustris (strain HaA2) protein is NADH-quinone oxidoreductase subunit C/D.